Reading from the N-terminus, the 142-residue chain is Large ribosomal subunit protein uL13 (142 aa).

Belongs to the universal ribosomal protein uL13 family. As to quaternary structure, part of the 50S ribosomal subunit.

Its function is as follows. This protein is one of the early assembly proteins of the 50S ribosomal subunit, although it is not seen to bind rRNA by itself. It is important during the early stages of 50S assembly. The polypeptide is Large ribosomal subunit protein uL13 (Yersinia pseudotuberculosis serotype O:1b (strain IP 31758)).